A 294-amino-acid chain; its full sequence is Cytidine deaminase (294 aa).

CMP/dCMP-type deaminase domains lie at 48–168 (DEDA…FGPK) and 186–294 (VSGD…VLLG). 89-91 (NME) is a binding site for substrate. His102 contacts Zn(2+). The Proton donor role is filled by Glu104. Cys129 and Cys132 together coordinate Zn(2+).

Belongs to the cytidine and deoxycytidylate deaminase family. In terms of assembly, homodimer. It depends on Zn(2+) as a cofactor.

The enzyme catalyses cytidine + H2O + H(+) = uridine + NH4(+). The catalysed reaction is 2'-deoxycytidine + H2O + H(+) = 2'-deoxyuridine + NH4(+). In terms of biological role, this enzyme scavenges exogenous and endogenous cytidine and 2'-deoxycytidine for UMP synthesis. In Klebsiella pneumoniae (strain 342), this protein is Cytidine deaminase.